The chain runs to 96 residues: Protein Vpr (96 aa).

The segment at 1–42 (MEQAPEDQGPQREPYNEWALELLEELKNEAVRHFPRLWLHGL) is homooligomerization. Serine 79 and serine 96 each carry phosphoserine; by host.

This sequence belongs to the HIV-1 VPR protein family. As to quaternary structure, homooligomer, may form homodimer. Interacts with p6-gag region of the Pr55 Gag precursor protein through a (Leu-X-X)4 motif near the C-terminus of the P6gag protein. Interacts with host UNG. May interact with host RAD23A/HHR23A. Interacts with host VPRBP/DCAF1, leading to hijack the CUL4A-RBX1-DDB1-DCAF1/VPRBP complex, mediating ubiquitination of host proteins such as TERT and ZGPAT and arrest of the cell cycle in G2 phase. Post-translationally, phosphorylated on several residues by host. These phosphorylations regulate VPR activity for the nuclear import of the HIV-1 pre-integration complex.

It is found in the virion. The protein resides in the host nucleus. The protein localises to the host extracellular space. During virus replication, may deplete host UNG protein, and incude G2-M cell cycle arrest. Acts by targeting specific host proteins for degradation by the 26S proteasome, through association with the cellular CUL4A-DDB1 E3 ligase complex by direct interaction with host VPRPB/DCAF-1. Cell cycle arrest reportedly occurs within hours of infection and is not blocked by antiviral agents, suggesting that it is initiated by the VPR carried into the virion. Additionally, VPR induces apoptosis in a cell cycle dependent manner suggesting that these two effects are mechanistically linked. Detected in the serum and cerebrospinal fluid of AIDS patient, VPR may also induce cell death to bystander cells. Functionally, during virus entry, plays a role in the transport of the viral pre-integration (PIC) complex to the host nucleus. This function is crucial for viral infection of non-dividing macrophages. May act directly at the nuclear pore complex, by binding nucleoporins phenylalanine-glycine (FG)-repeat regions. This chain is Protein Vpr, found in Human immunodeficiency virus type 1 group M subtype G (isolate SE6165) (HIV-1).